The primary structure comprises 538 residues: Putative cysteine ligase BshC (538 aa).

Residues 248–268 (ISKYKEVQEGLRNQQEVIKEL) are a coiled coil.

It belongs to the BshC family.

Its function is as follows. Involved in bacillithiol (BSH) biosynthesis. May catalyze the last step of the pathway, the addition of cysteine to glucosamine malate (GlcN-Mal) to generate BSH. The sequence is that of Putative cysteine ligase BshC from Bacillus cereus (strain ATCC 14579 / DSM 31 / CCUG 7414 / JCM 2152 / NBRC 15305 / NCIMB 9373 / NCTC 2599 / NRRL B-3711).